Here is a 360-residue protein sequence, read N- to C-terminus: Membrane-bound lytic murein transglycosylase C (360 aa).

The first 16 residues, 1 to 16 (MKKLLALAVIAPLLIS), serve as a signal peptide directing secretion. Cys-17 carries N-palmitoyl cysteine lipidation. A lipid anchor (S-diacylglycerol cysteine) is attached at Cys-17.

It belongs to the transglycosylase Slt family.

Its subcellular location is the cell outer membrane. The catalysed reaction is Exolytic cleavage of the (1-&gt;4)-beta-glycosidic linkage between N-acetylmuramic acid (MurNAc) and N-acetylglucosamine (GlcNAc) residues in peptidoglycan, from either the reducing or the non-reducing ends of the peptidoglycan chains, with concomitant formation of a 1,6-anhydrobond in the MurNAc residue.. In terms of biological role, murein-degrading enzyme. May play a role in recycling of muropeptides during cell elongation and/or cell division. The protein is Membrane-bound lytic murein transglycosylase C of Salmonella arizonae (strain ATCC BAA-731 / CDC346-86 / RSK2980).